The following is a 344-amino-acid chain: Calcium homeostasis modulator protein 3 (344 aa).

Over 1-20 the chain is Cytoplasmic; sequence MDKFRMLFQHFQSSSESVMN. The tract at residues 9-36 is central pore; the sequence is QHFQSSSESVMNGICLLLAAVTVKLYSS. A helical transmembrane segment spans residues 21–36; it reads GICLLLAAVTVKLYSS. Residues 37 to 48 are Extracellular-facing; the sequence is FDFNCPCLVHYN. Intrachain disulfides connect cysteine 41–cysteine 126 and cysteine 43–cysteine 157. A helical membrane pass occupies residues 49–71; the sequence is ALYGLGLLLTPPLALFLCGLLAN. Topologically, residues 72–98 are cytoplasmic; it reads RQSVVMVEEWRRPAGHRRKDPGIIRYM. Cysteine 99 carries the S-palmitoyl cysteine lipid modification. Residues 99–124 form a helical membrane-spanning segment; sequence CSSVLQRALAAPLVWILLALLDGKCF. The Extracellular segment spans residues 125 to 176; sequence VCAFSSSVDPEKFLDFANMTPSQVQLFLAKVPCKEDELVRDSPARKAVSRYL. An N-linked (GlcNAc...) asparagine glycan is attached at asparagine 142. A helical transmembrane segment spans residues 177 to 202; that stretch reads RCLSQAIGWSVTLLLIIAAFLARCLR. S-palmitoyl cysteine attachment occurs at residues cysteine 200 and cysteine 204. Residues 203-344 lie on the Cytoplasmic side of the membrane; that stretch reads PCFDQTVFLQ…GTRLSQHTDV (142 aa).

It belongs to the CALHM family. As to quaternary structure, associates with CALHM1 as a pore-forming subunit in a hetero-hexameric channel complex. N-glycosylated. In terms of processing, palmitoylated by ZDHHC3 and ZDHHC15. Palmitoylation positively regulates CALHM1:CALHM3 channel conductance. As to expression, specifically expressed in circumvallate taste bud cells.

It localises to the basolateral cell membrane. The enzyme catalyses ATP(in) = ATP(out). It catalyses the reaction Ca(2+)(in) = Ca(2+)(out). The catalysed reaction is Na(+)(in) = Na(+)(out). It carries out the reaction K(+)(in) = K(+)(out). The enzyme catalyses chloride(in) = chloride(out). In terms of biological role, pore-forming subunit of gustatory voltage-gated ion channels required for sensory perception of sweet, bitter and umami tastes. With CALHM1 forms a fast-activating voltage-gated ATP-release channel in type II taste bud cells, ATP acting as a neurotransmitter to activate afferent neural gustatory pathways. Acts both as a voltage-gated and calcium-activated ion channel: mediates neuronal excitability in response to membrane depolarization and low extracellular Ca(2+) concentration. Has poor ion selectivity and forms a wide pore (around 14 Angstroms) that mediates permeation of small ions including Ca(2+), Na(+), K(+) and Cl(-), as well as larger ions such as ATP(4-). The polypeptide is Calcium homeostasis modulator protein 3 (Homo sapiens (Human)).